Consider the following 413-residue polypeptide: DNA polymerase IV 1 (413 aa).

The UmuC domain occupies 7–188 (IFHVDMNSFY…LPIEEMYGIG (182 aa)). Positions 11 and 107 each coordinate Mg(2+). The active site involves glutamate 108.

This sequence belongs to the DNA polymerase type-Y family. In terms of assembly, monomer. Mg(2+) is required as a cofactor.

The protein localises to the cytoplasm. It carries out the reaction DNA(n) + a 2'-deoxyribonucleoside 5'-triphosphate = DNA(n+1) + diphosphate. Poorly processive, error-prone DNA polymerase involved in untargeted mutagenesis. Copies undamaged DNA at stalled replication forks, which arise in vivo from mismatched or misaligned primer ends. These misaligned primers can be extended by PolIV. Exhibits no 3'-5' exonuclease (proofreading) activity. May be involved in translesional synthesis, in conjunction with the beta clamp from PolIII. The polypeptide is DNA polymerase IV 1 (dinB1) (Halalkalibacterium halodurans (strain ATCC BAA-125 / DSM 18197 / FERM 7344 / JCM 9153 / C-125) (Bacillus halodurans)).